The chain runs to 150 residues: Geranyl diphosphate phosphohydrolase (150 aa).

Residues 14–147 enclose the Nudix hydrolase domain; it reads SIKVAVVVCL…DNVVQDGFNP (134 aa). Residues 48-69 carry the Nudix box motif; that stretch reads GHLEFGESFEECAARELKEETD. 2 residues coordinate Mg(2+): Glu-63 and Glu-67.

Belongs to the Nudix hydrolase family. Expressed in petals. Little or no expression in stamens, sepals or young leaves.

The protein resides in the cytoplasm. The enzyme catalyses (2E)-geranyl diphosphate + H2O = (2E)-geranyl phosphate + phosphate + H(+). Involved in a cytosolic pathway for the biosynthesis of free monoterpene alcohols that contribute to fragrance. Lacks terpene synthase activity, but has a diphosphohydrolase activity with geranyl diphosphate and farnesyl diphosphate as substrates. No activity with 8-oxo-dGTP and dGTP and unable to dephosphorylate geranyl phosphate to geraniol. The protein is Geranyl diphosphate phosphohydrolase of Rosa hybrid cultivar.